Reading from the N-terminus, the 91-residue chain is Small ribosomal subunit protein uS15c (91 aa).

This sequence belongs to the universal ribosomal protein uS15 family. Part of the 30S ribosomal subunit.

The protein localises to the plastid. Its subcellular location is the chloroplast. The protein is Small ribosomal subunit protein uS15c (rps15) of Phalaenopsis aphrodite subsp. formosana (Moth orchid).